A 1000-amino-acid chain; its full sequence is Ribosome assembly protein 1 (1000 aa).

Residues 17–246 enclose the tr-type G domain; it reads ENIRNFTLLA…YEKKLGLKQK (230 aa). GTP is bound by residues 26–33, 100–104, and 154–157; these read AHVDHGKT, DSPGH, and NKMD.

It belongs to the TRAFAC class translation factor GTPase superfamily. Classic translation factor GTPase family.

It localises to the cytoplasm. It carries out the reaction GTP + H2O = GDP + phosphate + H(+). With respect to regulation, GTPase activity is stimulated in the presence of 60S subunits. Its function is as follows. GTPase involved in the biogenesis of the 60S ribosomal subunit and translational activation of ribosomes. Together with sdo1, may trigger the GTP-dependent release of tif6 from 60S pre-ribosomes in the cytoplasm, thereby activating ribosomes for translation competence by allowing 80S ribosome assembly and facilitating tif6 recycling to the nucleus, where it is required for 60S rRNA processing and nuclear export. Inhibits GTPase activity of ribosome-bound EF-2. This Schizosaccharomyces pombe (strain 972 / ATCC 24843) (Fission yeast) protein is Ribosome assembly protein 1 (ria1).